The chain runs to 193 residues: 3-isopropylmalate dehydratase small subunit (193 aa).

Belongs to the LeuD family. LeuD type 1 subfamily. As to quaternary structure, heterodimer of LeuC and LeuD.

It carries out the reaction (2R,3S)-3-isopropylmalate = (2S)-2-isopropylmalate. It functions in the pathway amino-acid biosynthesis; L-leucine biosynthesis; L-leucine from 3-methyl-2-oxobutanoate: step 2/4. Its function is as follows. Catalyzes the isomerization between 2-isopropylmalate and 3-isopropylmalate, via the formation of 2-isopropylmaleate. The protein is 3-isopropylmalate dehydratase small subunit of Listeria monocytogenes serovar 1/2a (strain ATCC BAA-679 / EGD-e).